Here is a 205-residue protein sequence, read N- to C-terminus: Octanoyltransferase (205 aa).

The BPL/LPL catalytic domain maps to 30–205 (ERTADEIWLL…QALRARLGYA (176 aa)). Substrate contacts are provided by residues 69–76 (RGGQVTYH), 136–138 (SLG), and 149–151 (GLA). The active-site Acyl-thioester intermediate is cysteine 167.

Belongs to the LipB family.

The protein localises to the cytoplasm. The enzyme catalyses octanoyl-[ACP] + L-lysyl-[protein] = N(6)-octanoyl-L-lysyl-[protein] + holo-[ACP] + H(+). The protein operates within protein modification; protein lipoylation via endogenous pathway; protein N(6)-(lipoyl)lysine from octanoyl-[acyl-carrier-protein]: step 1/2. Catalyzes the transfer of endogenously produced octanoic acid from octanoyl-acyl-carrier-protein onto the lipoyl domains of lipoate-dependent enzymes. Lipoyl-ACP can also act as a substrate although octanoyl-ACP is likely to be the physiological substrate. The sequence is that of Octanoyltransferase from Ectopseudomonas mendocina (strain ymp) (Pseudomonas mendocina).